The chain runs to 61 residues: Small ribosomal subunit protein uS14 (61 aa).

4 residues coordinate Zn(2+): C24, C27, C40, and C43.

The protein belongs to the universal ribosomal protein uS14 family. Zinc-binding uS14 subfamily. In terms of assembly, part of the 30S ribosomal subunit. Contacts proteins S3 and S10. It depends on Zn(2+) as a cofactor.

Binds 16S rRNA, required for the assembly of 30S particles and may also be responsible for determining the conformation of the 16S rRNA at the A site. This Syntrophus aciditrophicus (strain SB) protein is Small ribosomal subunit protein uS14.